Reading from the N-terminus, the 906-residue chain is Protein translocase subunit SecA (906 aa).

Residues glutamine 86, 104 to 108 (GEGKT), and aspartate 511 contribute to the ATP site. Basic and acidic residues-rich tracts occupy residues 853–865 (HESV…RHDE) and 877–888 (VRREGPKVKRND). The tract at residues 853–906 (HESVIDNNQRHDEDEQEEAPKVQQVRREGPKVKRNDPCPCGSGKKYKQCHSKVE) is disordered. The Zn(2+) site is built by cysteine 890, cysteine 892, cysteine 901, and histidine 902. The segment covering 896–906 (KKYKQCHSKVE) has biased composition (basic residues).

It belongs to the SecA family. In terms of assembly, monomer and homodimer. Part of the essential Sec protein translocation apparatus which comprises SecA, SecYEG and auxiliary proteins SecDF-YajC and YidC. It depends on Zn(2+) as a cofactor.

Its subcellular location is the cell inner membrane. The protein resides in the cytoplasm. The catalysed reaction is ATP + H2O + cellular proteinSide 1 = ADP + phosphate + cellular proteinSide 2.. In terms of biological role, part of the Sec protein translocase complex. Interacts with the SecYEG preprotein conducting channel. Has a central role in coupling the hydrolysis of ATP to the transfer of proteins into and across the cell membrane, serving both as a receptor for the preprotein-SecB complex and as an ATP-driven molecular motor driving the stepwise translocation of polypeptide chains across the membrane. This Francisella tularensis subsp. tularensis (strain WY96-3418) protein is Protein translocase subunit SecA.